Here is a 444-residue protein sequence, read N- to C-terminus: Spermidine/putrescine import ATP-binding protein PotA (444 aa).

The ABC transporter domain occupies 11-332; the sequence is ISLVDVDKEF…PVNKWVANFI (322 aa). Residue 43 to 50 coordinates ATP; sequence GPSGSGKT. Residues 111–201 form an insert region; the sequence is RIKKKAEEIP…ESFKKKYLTR (91 aa).

It belongs to the ABC transporter superfamily. Spermidine/putrescine importer (TC 3.A.1.11.1) family. The complex is composed of two ATP-binding proteins (PotA), two transmembrane proteins (PotB and PotC) and a solute-binding protein (PotD).

The protein localises to the cell membrane. It carries out the reaction ATP + H2O + polyamine-[polyamine-binding protein]Side 1 = ADP + phosphate + polyamineSide 2 + [polyamine-binding protein]Side 1.. Functionally, part of the ABC transporter complex PotABCD involved in spermidine/putrescine import. Responsible for energy coupling to the transport system. In Mesomycoplasma hyopneumoniae (strain 232) (Mycoplasma hyopneumoniae), this protein is Spermidine/putrescine import ATP-binding protein PotA.